A 346-amino-acid polypeptide reads, in one-letter code: Serpentine receptor class beta-11 (346 aa).

The next 7 membrane-spanning stretches (helical) occupy residues 26–46, 57–77, 102–122, 139–159, 186–206, 239–259, and 278–298; these read YQMI…LFKL, TIFI…LTTS, IWNF…CSVT, SVVM…CIIF, FTFF…DLIL, VFLI…VVFF, and TFST…SSFF.

The protein belongs to the nematode receptor-like protein srb family.

The protein resides in the membrane. This is Serpentine receptor class beta-11 (srb-11) from Caenorhabditis elegans.